Reading from the N-terminus, the 1889-residue chain is E3 ubiquitin-protein ligase UBR3 (1889 aa).

The interval 1 to 27 (MAAAAAAAAVGDPQPPQPEAPAQGLAL) is disordered. The segment at 118-189 (ALCGLVWTAN…ESGFCRRHQI (72 aa)) adopts a UBR-type zinc-finger fold. Positions 338-362 (LGQIDSSDEEDQDGSQGLGKRKRVK) are disordered. Ser-343 and Ser-344 each carry phosphoserine. The next 2 helical transmembrane spans lie at 761-781 (MLEG…HLGM) and 919-939 (LLHC…ILMD). Residues 1167-1199 (KKITAAEKKTLDKEERRQKARERQQKLLAEFAS) are a coiled coil. A Phosphoserine modification is found at Ser-1199. Residues 1306–1364 (DSSCLLAVSIGWEGGVYVQTCGHTLHIDCHKSYMESLRNDQVLQGFSVDKGEFTCPLCR) form an RING-type; degenerate zinc finger. Residues 1807–1827 (QNCGAGTGIFLLINASVIIII) traverse the membrane as a helical segment.

It belongs to the E3 ubiquitin-protein ligase UBR1-like family. Interacts with UBE2A and UBE2B. In terms of tissue distribution, expressed in numerous cells of the smell, touch, vision, hearing and taste senses. Expressed in cells of the olfactory pathway, including the olfactory cell layer of the main olfactory epithelium (MOE), a mitral neuron cell layer of the olfactory bulb (OB), and a pyramidal cell layer of the piriform cortex of the olfactory cortex (OC). Expressed in the vomeronasal sensory epithelium of the vomeronasal organ (VNO) and the mitral cells of the accessory olfactory bulb. Expressed in tactile tissues, including the dorsal root ganglion, trigeminal ganglion and follicle-sinus complexes. Expressed in cells between hair follicle and sinus and also in the region of the rete ridge collar. Expressed in taste buds of the fungiform, circumvallate, and foliate papillae. Expressed in the spiral ganglion, the organ of Corti of the cochlea in the inner ear, in the sensory epithelium of macula and vestibular ganglion of the balancing system (at protein level). Expressed in the liver and skeletal muscle.

It localises to the membrane. The catalysed reaction is S-ubiquitinyl-[E2 ubiquitin-conjugating enzyme]-L-cysteine + [acceptor protein]-L-lysine = [E2 ubiquitin-conjugating enzyme]-L-cysteine + N(6)-ubiquitinyl-[acceptor protein]-L-lysine.. The protein operates within protein modification; protein ubiquitination. Its function is as follows. E3 ubiquitin-protein ligase which is a component of the N-end rule pathway. Does not bind to proteins bearing specific N-terminal residues that are destabilizing according to the N-end rule, leading to their ubiquitination and subsequent degradation. May play a role in Shh signaling by mediating the ubiquitination of Kif7. May be important for MYH9 function in certain tissues, possibly by regulating the ubiquitination of MYH9 and consequently affecting its interaction with MYO7A. This Mus musculus (Mouse) protein is E3 ubiquitin-protein ligase UBR3 (Ubr3).